The primary structure comprises 321 residues: Beta-porphyranase B (321 aa).

The N-terminal stretch at 1-20 is a signal peptide; that stretch reads MRKTVLYLSAASLFLSSYTL. The region spanning 31–319 is the GH16 domain; sequence EHIKNLPEAP…WVRAYKLVPI (289 aa). Substrate contacts are provided by Trp72, Arg76, Glu173, Glu178, and Glu284. Glu173 acts as the Nucleophile in catalysis. Glu178 acts as the Proton donor in catalysis.

The protein belongs to the glycosyl hydrolase 16 family.

The enzyme catalyses Hydrolysis of beta-D-galactopyranose-(1-&gt;4)-alpha-L-galactopyranose-6-sulfate linkages in porphyran.. Its function is as follows. Cleaves the sulfated polysaccharide porphyran at the (1-&gt;4) linkages between beta-D-galactopyranose and alpha-L-galactopyranose-6-sulfate, forming mostly the disaccharide alpha-L-galactopyranose-6-sulfate-(1-&gt;3)-beta-D-galactose. Some longer oligosaccharides of even number of residues are also observed. Inactive on the non-sulfated agarose portion of the porphyran backbone. This chain is Beta-porphyranase B, found in Phocaeicola plebeius (strain DSM 17135 / JCM 12973 / CCUG 54634 / M2) (Bacteroides plebeius).